We begin with the raw amino-acid sequence, 432 residues long: Glutamate--tRNA ligase 2 (432 aa).

Residues 6 to 16 carry the 'HIGH' region motif; that stretch reads PSPTGDMHIGN. The short motif at 235–239 is the 'KMSKS' region element; sequence KMSKR. Lysine 238 is an ATP binding site.

Belongs to the class-I aminoacyl-tRNA synthetase family. Glutamate--tRNA ligase type 1 subfamily. In terms of assembly, monomer.

The protein resides in the cytoplasm. It catalyses the reaction tRNA(Glu) + L-glutamate + ATP = L-glutamyl-tRNA(Glu) + AMP + diphosphate. Functionally, catalyzes the attachment of glutamate to tRNA(Glu) in a two-step reaction: glutamate is first activated by ATP to form Glu-AMP and then transferred to the acceptor end of tRNA(Glu). In Sulfurimonas denitrificans (strain ATCC 33889 / DSM 1251) (Thiomicrospira denitrificans (strain ATCC 33889 / DSM 1251)), this protein is Glutamate--tRNA ligase 2.